Reading from the N-terminus, the 431-residue chain is O-methyltransferase gliM (431 aa).

Residues 20–85 (EFKAIVNDLR…SMDKLQLQLV (66 aa)) adopt a coiled-coil conformation. S-adenosyl-L-methionine-binding positions include aspartate 287 and 319-321 (GDF). Residue histidine 338 is the Proton acceptor of the active site.

The protein belongs to the class I-like SAM-binding methyltransferase superfamily. Cation-independent O-methyltransferase family. COMT subfamily.

It functions in the pathway mycotoxin biosynthesis. Its function is as follows. O-methyltransferase; part of the gene cluster that mediates the biosynthesis of gliotoxin, a member of the epipolythiodioxopiperazine (ETP) class of toxins characterized by a disulfide bridged cyclic dipeptide. The first step in gliotoxin biosynthesis is the condensation of serine and phenylalanine to form the cyclo-L-phenylalanyl-L-serine diketopiperazine (DKP) by the NRPS gliP. GliP is also able to produce the DKP cyclo-L-tryptophanyl-L-serine, suggesting that the substrate specificity of the first adenylation (A) domain in gliP is sufficiently relaxed to accommodate both L-Phe and L-Trp. The cytochrome P450 monooxygenase gliC has been shown to catalyze the subsequent hydroxylation of the alpha-carbon of L-Phe in cyclo-L-phenylalanyl-L-serine whereas the second cytochrome P450 enzyme, gliF, is presumably involved in the modification of the DKP side chain. The glutathione S-transferase (GST) gliG then forms a bis-glutathionylated biosynthetic intermediate which is responsible for the sulfurization of gliotoxin. This bis-glutathionylated intermediate is subsequently processed by the gamma-glutamyl cyclotransferase gliK to remove both gamma-glutamyl moieties. Subsequent processing via gliI yields a biosynthetic intermediate, which is N-methylated via the N-methyltransferase gliN, before the gliotoxin oxidoreductase gliT-mediated disulfide bridge closure. GliN-mediated amide methylation confers stability to ETP, damping the spontaneous formation of tri- and tetrasulfides. Intracellular dithiol gliotoxin oxidized by gliT is subsequently effluxed by gliA. Gliotoxin contributes to pathogenesis during invasive aspergillosis. In macrophages and neutrophils, gliotoxin showed inhibition of various different cell functions including cytokine production, antigen presentation, phagocytosis, and production of reactive oxygen species. This chain is O-methyltransferase gliM, found in Aspergillus fumigatus (strain ATCC MYA-4609 / CBS 101355 / FGSC A1100 / Af293) (Neosartorya fumigata).